The sequence spans 259 residues: Protein BEAN1 (259 aa).

A helical membrane pass occupies residues 36–56; the sequence is VLVASAVIGVVIILSCITIIV. Over residues 71 to 89 the composition is skewed to basic residues; the sequence is RHRHHRHHHHHHHHRRRRH. Disordered stretches follow at residues 71–91 and 152–259; these read RHRH…RHRE and VGPG…ERIV. Polar residues predominate over residues 171 to 187; it reads LTDSCPTLDGTSDSGSG. Residues 221–230 show a composition bias toward low complexity; that stretch reads GAGPPSGLLP.

In terms of assembly, interacts with NEDD4.

It localises to the membrane. The sequence is that of Protein BEAN1 (BEAN1) from Homo sapiens (Human).